The following is a 288-amino-acid chain: Probable syndecan (288 aa).

The signal sequence occupies residues Met-1–Ala-26. Over Ala-27–Ala-231 the chain is Extracellular. The segment at Glu-67 to Thr-175 is disordered. The N-linked (GlcNAc...) asparagine glycan is linked to Asn-69. O-linked (Xyl...) (glycosaminoglycan) serine glycans are attached at residues Ser-71 and Ser-86. A compositionally biased stretch (polar residues) spans Pro-89–Ser-104. Positions Ala-106–Pro-124 are enriched in low complexity. Positions Val-141 to Asp-164 are enriched in acidic residues. Residue Ser-214 is glycosylated (O-linked (Xyl...) (glycosaminoglycan) serine). Residues Ile-232–Phe-252 traverse the membrane as a helical segment. The Cytoplasmic segment spans residues Arg-253–Ala-288.

Belongs to the syndecan proteoglycan family.

It localises to the membrane. The protein localises to the cell surface. It is found in the cell junction. The protein resides in the cytoplasm. Functionally, cell surface proteoglycan that bears heparan sulfate. Required for correct mitotic spindle orientation of the ABar blastomere division plane and this may be through modulation of astral microtubule array, and in association with the wnt-signaling proteins mig-5 and dsh-2. Involved in the migration of AQR and PQR neurons, which descend from the Q neuroblasts. Promotes the axon guidance of D-type motor neurons. In Caenorhabditis elegans, this protein is Probable syndecan.